The chain runs to 337 residues: Ketol-acid reductoisomerase (NADP(+)) (337 aa).

The region spanning 3–183 is the KARI N-terminal Rossmann domain; the sequence is IDVFYDDDAD…GGGRAGVIPT (181 aa). NADP(+)-binding positions include 26–29, Arg-49, Ser-52, Ser-54, and 84–87; these read YGSQ and DTSQ. His-109 is a catalytic residue. Residue Gly-135 coordinates NADP(+). The 146-residue stretch at 184 to 329 folds into the KARI C-terminal knotted domain; it reads TFEAETVTDL…EKLRDLMSWV (146 aa). 4 residues coordinate Mg(2+): Asp-192, Glu-196, Glu-228, and Glu-232. Position 253 (Ser-253) interacts with substrate.

It belongs to the ketol-acid reductoisomerase family. Mg(2+) serves as cofactor.

The catalysed reaction is (2R)-2,3-dihydroxy-3-methylbutanoate + NADP(+) = (2S)-2-acetolactate + NADPH + H(+). It catalyses the reaction (2R,3R)-2,3-dihydroxy-3-methylpentanoate + NADP(+) = (S)-2-ethyl-2-hydroxy-3-oxobutanoate + NADPH + H(+). It participates in amino-acid biosynthesis; L-isoleucine biosynthesis; L-isoleucine from 2-oxobutanoate: step 2/4. Its pathway is amino-acid biosynthesis; L-valine biosynthesis; L-valine from pyruvate: step 2/4. Involved in the biosynthesis of branched-chain amino acids (BCAA). Catalyzes an alkyl-migration followed by a ketol-acid reduction of (S)-2-acetolactate (S2AL) to yield (R)-2,3-dihydroxy-isovalerate. In the isomerase reaction, S2AL is rearranged via a Mg-dependent methyl migration to produce 3-hydroxy-3-methyl-2-ketobutyrate (HMKB). In the reductase reaction, this 2-ketoacid undergoes a metal-dependent reduction by NADPH to yield (R)-2,3-dihydroxy-isovalerate. This is Ketol-acid reductoisomerase (NADP(+)) from Corynebacterium urealyticum (strain ATCC 43042 / DSM 7109).